The following is a 390-amino-acid chain: Lipid-A-disaccharide synthase (390 aa).

The protein belongs to the LpxB family.

The enzyme catalyses a lipid X + a UDP-2-N,3-O-bis[(3R)-3-hydroxyacyl]-alpha-D-glucosamine = a lipid A disaccharide + UDP + H(+). It functions in the pathway bacterial outer membrane biogenesis; LPS lipid A biosynthesis. Condensation of UDP-2,3-diacylglucosamine and 2,3-diacylglucosamine-1-phosphate to form lipid A disaccharide, a precursor of lipid A, a phosphorylated glycolipid that anchors the lipopolysaccharide to the outer membrane of the cell. This chain is Lipid-A-disaccharide synthase, found in Haemophilus ducreyi (strain 35000HP / ATCC 700724).